The chain runs to 432 residues: UDP-N-acetylmuramate--L-alanine ligase (432 aa).

ATP is bound at residue 109-115 (GAHGKST).

The protein belongs to the MurCDEF family.

The protein resides in the cytoplasm. It catalyses the reaction UDP-N-acetyl-alpha-D-muramate + L-alanine + ATP = UDP-N-acetyl-alpha-D-muramoyl-L-alanine + ADP + phosphate + H(+). It functions in the pathway cell wall biogenesis; peptidoglycan biosynthesis. Functionally, cell wall formation. This Campylobacter jejuni subsp. jejuni serotype O:2 (strain ATCC 700819 / NCTC 11168) protein is UDP-N-acetylmuramate--L-alanine ligase.